A 295-amino-acid chain; its full sequence is Tyrosine recombinase XerC (295 aa).

A Core-binding (CB) domain is found at 1–85 (MQTYLQKYWN…ALRQFLAFLV (85 aa)). The Tyr recombinase domain occupies 106-285 (HLPKNINAEQ…NFQHLAEVYD (180 aa)). Residues Arg-145, Lys-169, His-237, Arg-240, and His-263 contribute to the active site. Catalysis depends on Tyr-272, which acts as the O-(3'-phospho-DNA)-tyrosine intermediate.

This sequence belongs to the 'phage' integrase family. XerC subfamily. As to quaternary structure, forms a cyclic heterotetrameric complex composed of two molecules of XerC and two molecules of XerD.

The protein resides in the cytoplasm. In terms of biological role, site-specific tyrosine recombinase, which acts by catalyzing the cutting and rejoining of the recombining DNA molecules. The XerC-XerD complex is essential to convert dimers of the bacterial chromosome into monomers to permit their segregation at cell division. It also contributes to the segregational stability of plasmids. The polypeptide is Tyrosine recombinase XerC (Mannheimia succiniciproducens (strain KCTC 0769BP / MBEL55E)).